A 447-amino-acid chain; its full sequence is N-succinylarginine dihydrolase (447 aa).

Substrate contacts are provided by residues 19–28 (AGLSFGNEAS), N110, and 137–138 (HR). Residue E174 is part of the active site. Residue R212 coordinates substrate. Residue H248 is part of the active site. Substrate contacts are provided by D250 and N359. Residue C365 is the Nucleophile of the active site.

This sequence belongs to the succinylarginine dihydrolase family. As to quaternary structure, homodimer.

The catalysed reaction is N(2)-succinyl-L-arginine + 2 H2O + 2 H(+) = N(2)-succinyl-L-ornithine + 2 NH4(+) + CO2. Its pathway is amino-acid degradation; L-arginine degradation via AST pathway; L-glutamate and succinate from L-arginine: step 2/5. Functionally, catalyzes the hydrolysis of N(2)-succinylarginine into N(2)-succinylornithine, ammonia and CO(2). The protein is N-succinylarginine dihydrolase of Escherichia coli (strain SE11).